The chain runs to 266 residues: Probable phosphoadenosine phosphosulfate reductase (266 aa).

The interval 219–246 (TQPVREGEDERAGRWRGREKTECGLHSH) is disordered. The segment covering 223–243 (REGEDERAGRWRGREKTECGL) has biased composition (basic and acidic residues).

The protein belongs to the PAPS reductase family. CysH subfamily.

The protein resides in the cytoplasm. Its subcellular location is the nucleus. It catalyses the reaction [thioredoxin]-disulfide + sulfite + adenosine 3',5'-bisphosphate + 2 H(+) = [thioredoxin]-dithiol + 3'-phosphoadenylyl sulfate. It functions in the pathway sulfur metabolism; hydrogen sulfide biosynthesis; sulfite from sulfate: step 3/3. In terms of biological role, the NADP dependent reduction of PAPS into sulfite involves thioredoxin which probably plays the role of a thiol carrier. Required for methionine synthesis. The sequence is that of Probable phosphoadenosine phosphosulfate reductase (met16) from Schizosaccharomyces pombe (strain 972 / ATCC 24843) (Fission yeast).